We begin with the raw amino-acid sequence, 521 residues long: Cytochrome P450 1A1 (521 aa).

Position 229 (Phe-229) interacts with substrate. Heme is bound at residue Cys-463.

It belongs to the cytochrome P450 family. Heme serves as cofactor.

The protein resides in the endoplasmic reticulum membrane. It is found in the microsome membrane. It carries out the reaction an organic molecule + reduced [NADPH--hemoprotein reductase] + O2 = an alcohol + oxidized [NADPH--hemoprotein reductase] + H2O + H(+). Its function is as follows. Cytochromes P450 are a group of heme-thiolate monooxygenases. They oxidize a variety of structurally unrelated compounds, including steroids, fatty acids, and xenobiotics. In Oryzias latipes (Japanese rice fish), this protein is Cytochrome P450 1A1 (cyp1a1).